The primary structure comprises 143 residues: Large ribosomal subunit protein uL16 (143 aa).

This sequence belongs to the universal ribosomal protein uL16 family. Part of the 50S ribosomal subunit.

Binds 23S rRNA and is also seen to make contacts with the A and possibly P site tRNAs. The protein is Large ribosomal subunit protein uL16 of Tropheryma whipplei (strain TW08/27) (Whipple's bacillus).